We begin with the raw amino-acid sequence, 454 residues long: Ribosomal protein uS12 methylthiotransferase RimO (454 aa).

The region spanning 14–125 is the MTTase N-terminal domain; the sequence is SKIAFSHVGC…IAKVLDRVEK (112 aa). Cys-23, Cys-59, Cys-88, Cys-163, Cys-167, and Cys-170 together coordinate [4Fe-4S] cluster. Residues 149–378 form the Radical SAM core domain; it reads DKNKFVAYLR…ISVQQNISRE (230 aa). The TRAM domain occupies 381 to 452; sequence QIYVGSKMKI…EYDLYGETIK (72 aa).

Belongs to the methylthiotransferase family. RimO subfamily. [4Fe-4S] cluster serves as cofactor.

The protein resides in the cytoplasm. The catalysed reaction is L-aspartate(89)-[ribosomal protein uS12]-hydrogen + (sulfur carrier)-SH + AH2 + 2 S-adenosyl-L-methionine = 3-methylsulfanyl-L-aspartate(89)-[ribosomal protein uS12]-hydrogen + (sulfur carrier)-H + 5'-deoxyadenosine + L-methionine + A + S-adenosyl-L-homocysteine + 2 H(+). Functionally, catalyzes the methylthiolation of an aspartic acid residue of ribosomal protein uS12. This Prochlorococcus marinus (strain MIT 9301) protein is Ribosomal protein uS12 methylthiotransferase RimO.